We begin with the raw amino-acid sequence, 764 residues long: DNA polymerase 3 (764 aa).

It belongs to the DNA polymerase type-B family.

The enzyme catalyses DNA(n) + a 2'-deoxyribonucleoside 5'-triphosphate = DNA(n+1) + diphosphate. The protein is DNA polymerase 3 (dpo3) of Saccharolobus solfataricus (strain ATCC 35092 / DSM 1617 / JCM 11322 / P2) (Sulfolobus solfataricus).